Consider the following 233-residue polypeptide: Ribose-5-phosphate isomerase A (233 aa).

Substrate-binding positions include 28-31, 83-86, and 96-99; these read TGST, DGAD, and KGGG. The Proton acceptor role is filled by glutamate 105. Lysine 123 contributes to the substrate binding site.

It belongs to the ribose 5-phosphate isomerase family. In terms of assembly, homodimer.

The enzyme catalyses aldehydo-D-ribose 5-phosphate = D-ribulose 5-phosphate. It functions in the pathway carbohydrate degradation; pentose phosphate pathway; D-ribose 5-phosphate from D-ribulose 5-phosphate (non-oxidative stage): step 1/1. Its function is as follows. Catalyzes the reversible conversion of ribose-5-phosphate to ribulose 5-phosphate. This is Ribose-5-phosphate isomerase A from Rhizobium rhizogenes (strain K84 / ATCC BAA-868) (Agrobacterium radiobacter).